A 293-amino-acid polypeptide reads, in one-letter code: Pyridoxal 5'-phosphate synthase subunit PdxS (293 aa).

Asp25 lines the D-ribose 5-phosphate pocket. Lys82 (schiff-base intermediate with D-ribose 5-phosphate) is an active-site residue. Gly154 serves as a coordination point for D-ribose 5-phosphate. Arg166 contributes to the D-glyceraldehyde 3-phosphate binding site. Residues Gly215 and 236–237 (GS) contribute to the D-ribose 5-phosphate site.

Belongs to the PdxS/SNZ family. In terms of assembly, in the presence of PdxT, forms a dodecamer of heterodimers.

It catalyses the reaction aldehydo-D-ribose 5-phosphate + D-glyceraldehyde 3-phosphate + L-glutamine = pyridoxal 5'-phosphate + L-glutamate + phosphate + 3 H2O + H(+). The protein operates within cofactor biosynthesis; pyridoxal 5'-phosphate biosynthesis. Catalyzes the formation of pyridoxal 5'-phosphate from ribose 5-phosphate (RBP), glyceraldehyde 3-phosphate (G3P) and ammonia. The ammonia is provided by the PdxT subunit. Can also use ribulose 5-phosphate and dihydroxyacetone phosphate as substrates, resulting from enzyme-catalyzed isomerization of RBP and G3P, respectively. The polypeptide is Pyridoxal 5'-phosphate synthase subunit PdxS (Thermotoga petrophila (strain ATCC BAA-488 / DSM 13995 / JCM 10881 / RKU-1)).